The chain runs to 179 residues: Large ribosomal subunit protein uL5 (179 aa).

Contacts the P site tRNA. Forms a bridge to the 30S subunit in the 70S ribosome. Part of the 50S ribosomal subunit. Part of the 5S rRNA/L5/L18 subcomplex; in this organism only 2 proteins, L5 and L18 have been shown to be part of the 5S rRNA subcomplex, unlike E.coli and T.thermophilus where L25 (TL5) is also found. Has been shown to bind 5S rRNA.

Functionally, this is one of the proteins that bind and probably mediate the attachment of the 5S RNA into the large ribosomal subunit, where it forms part of the central protuberance. In the 70S ribosome it contacts protein S13 of the 30S subunit (bridge B1b), connecting the 2 subunits; this bridge is implicated in subunit movement. Contacts the P site tRNA; the 5S rRNA and some of its associated proteins might help stabilize positioning of ribosome-bound tRNAs. This chain is Large ribosomal subunit protein uL5 (rplE), found in Geobacillus stearothermophilus (Bacillus stearothermophilus).